The primary structure comprises 406 residues: Digeranylgeranylglycerophospholipid reductase 2 (406 aa).

The FAD site is built by Gly-15, Glu-34, Cys-45, Ala-46, Gly-48, Arg-99, Ala-123, Asp-279, Gly-291, and Ile-292.

Belongs to the geranylgeranyl reductase family. DGGGPL reductase subfamily. The cofactor is FAD.

The catalysed reaction is a 2,3-bis-O-phytanyl-sn-glycerol 1-phospholipid + 8 oxidized 2[4Fe-4S]-[ferredoxin] = a 2,3-bis-O-(geranylgeranyl)-sn-glycerol 1-phospholipid + 8 reduced 2[4Fe-4S]-[ferredoxin] + 16 H(+). It carries out the reaction 2,3-bis-O-(phytanyl)-sn-glycerol 1-phosphate + 8 oxidized 2[4Fe-4S]-[ferredoxin] = 2,3-bis-O-(geranylgeranyl)-sn-glycerol 1-phosphate + 8 reduced 2[4Fe-4S]-[ferredoxin] + 16 H(+). The enzyme catalyses a 2,3-bis-O-phytanyl-sn-glycerol 1-phospholipid + 8 A = a 2,3-bis-O-(geranylgeranyl)-sn-glycerol 1-phospholipid + 8 AH2. It catalyses the reaction CDP-2,3-bis-O-(geranylgeranyl)-sn-glycerol + 8 AH2 = CDP-2,3-bis-O-(phytanyl)-sn-glycerol + 8 A. The catalysed reaction is archaetidylserine + 8 AH2 = 2,3-bis-O-phytanyl-sn-glycero-3-phospho-L-serine + 8 A. It participates in membrane lipid metabolism; glycerophospholipid metabolism. In terms of biological role, is involved in the reduction of 2,3-digeranylgeranylglycerophospholipids (unsaturated archaeols) into 2,3-diphytanylglycerophospholipids (saturated archaeols) in the biosynthesis of archaeal membrane lipids. Catalyzes the formation of archaetidic acid (2,3-di-O-phytanyl-sn-glyceryl phosphate) from 2,3-di-O-geranylgeranylglyceryl phosphate (DGGGP) via the hydrogenation of each double bond of the isoprenoid chains. Is also probably able to reduce double bonds of geranyl groups in CDP-2,3-bis-O-(geranylgeranyl)-sn-glycerol and archaetidylserine, thus acting at various stages in the biosynthesis of archaeal membrane lipids. This chain is Digeranylgeranylglycerophospholipid reductase 2, found in Methanococcoides burtonii (strain DSM 6242 / NBRC 107633 / OCM 468 / ACE-M).